Consider the following 201-residue polypeptide: Recombination protein RecR (201 aa).

The C4-type zinc finger occupies 57–72 (CQVCYSLSDNDICDIC). Residues 80–177 (NKICIVESYP…RITRITYGIS (98 aa)) enclose the Toprim domain.

It belongs to the RecR family.

Its function is as follows. May play a role in DNA repair. It seems to be involved in an RecBC-independent recombinational process of DNA repair. It may act with RecF and RecO. The protein is Recombination protein RecR of Brachyspira hyodysenteriae (strain ATCC 49526 / WA1).